Reading from the N-terminus, the 272-residue chain is Streptomycin 3''-kinase (272 aa).

Catalysis depends on D190, which acts as the Proton acceptor.

It belongs to the aminoglycoside phosphotransferase family.

The catalysed reaction is streptomycin + ATP = streptomycin 3''-phosphate + ADP + H(+). The aminoglycoside phosphotransferases achieve inactivation of their antibiotic substrates by phosphorylation. This is Streptomycin 3''-kinase (aphE) from Streptomyces griseus.